Reading from the N-terminus, the 282-residue chain is MIYETAPAKINLTLDTLFKRDDGYHEIAMIMTTVDLNDRLSFQKRKDKKIVVDIEHNYVPNDHKNLAYRAAQLMMETYDLNEGVTITIDKDIPVSAGLAGGSADAAATMRGINRLFNLDKSLHELSDLGIQIGTDIPFCIYNRTAVCKGRGEKIRFLKKPPSAWVVLAKPNLGISSADVFKALDLDDAHHVDTEMCEKAIVEGDYKQLCESLSNRLEPVSMSMHPEIKKIKNNMLQCGADGALMSGSGPTVYGLAQKESQAKKIYNAVNGCCNEVYLVRLLG.

Lys-9 is a catalytic residue. 93–103 (PVSAGLAGGSA) is a binding site for ATP. The active site involves Asp-135.

Belongs to the GHMP kinase family. IspE subfamily.

It catalyses the reaction 4-CDP-2-C-methyl-D-erythritol + ATP = 4-CDP-2-C-methyl-D-erythritol 2-phosphate + ADP + H(+). In terms of biological role, catalyzes the phosphorylation of the position 2 hydroxy group of 4-diphosphocytidyl-2C-methyl-D-erythritol. This Staphylococcus haemolyticus (strain JCSC1435) protein is Putative 4-diphosphocytidyl-2-C-methyl-D-erythritol kinase.